The primary structure comprises 124 residues: Small ribosomal subunit protein uS13 (124 aa).

Positions 95–124 (GLPVRGQRTKTNARTRKGPKRTIAGKKKAR) are disordered.

Belongs to the universal ribosomal protein uS13 family. Part of the 30S ribosomal subunit. Forms a loose heterodimer with protein S19. Forms two bridges to the 50S subunit in the 70S ribosome.

Located at the top of the head of the 30S subunit, it contacts several helices of the 16S rRNA. In the 70S ribosome it contacts the 23S rRNA (bridge B1a) and protein L5 of the 50S subunit (bridge B1b), connecting the 2 subunits; these bridges are implicated in subunit movement. Contacts the tRNAs in the A and P-sites. This Mycobacterium avium (strain 104) protein is Small ribosomal subunit protein uS13.